Reading from the N-terminus, the 344-residue chain is Ferrochelatase (344 aa).

Residues histidine 214 and glutamate 295 each contribute to the Fe cation site.

The protein belongs to the ferrochelatase family.

It localises to the cytoplasm. The enzyme catalyses heme b + 2 H(+) = protoporphyrin IX + Fe(2+). It functions in the pathway porphyrin-containing compound metabolism; protoheme biosynthesis; protoheme from protoporphyrin-IX: step 1/1. In terms of biological role, catalyzes the ferrous insertion into protoporphyrin IX. This chain is Ferrochelatase, found in Rhizobium etli (strain ATCC 51251 / DSM 11541 / JCM 21823 / NBRC 15573 / CFN 42).